Consider the following 772-residue polypeptide: Subtilisin-like protease SBT5.3 (772 aa).

An N-terminal signal peptide occupies residues 1 to 25; sequence MKLTHNFSFLLLLLLVHMSSKHILA. An Inhibitor I9 domain is found at 31–116; it reads SYVVYFGAHS…VFPNKALKLH (86 aa). A Peptidase S8 domain is found at 120–628; that stretch reads SWDFLGLEHN…AGHVQPNLAV (509 aa). Residue D153 is the Charge relay system of the active site. A glycan (N-linked (GlcNAc...) asparagine) is linked at N211. H223 serves as the catalytic Charge relay system. N246, N306, and N396 each carry an N-linked (GlcNAc...) asparagine glycan. One can recognise a PA domain in the interval 398–480; that stretch reads SALDAQLCKL…KDSFAVSRYI (83 aa). Residue S561 is the Charge relay system of the active site. N-linked (GlcNAc...) asparagine glycosylation is found at N606, N651, N662, N684, and N725.

Belongs to the peptidase S8 family. In terms of tissue distribution, expressed specifically at sites of lateral root emergence.

Its subcellular location is the secreted. It is found in the cell wall. In terms of biological role, serine protease. Has a substrate preference for the hydrophobic residues Phe and Ala and the basic residue Asp in the P1 position, and for Asp, Leu or Ala in the P1' position. May play a role in the degradation of structural proteins in the extracellular matrix of cells located above sites of lateral root formation and thus facilitate lateral root emergence. The sequence is that of Subtilisin-like protease SBT5.3 (AIR3) from Arabidopsis thaliana (Mouse-ear cress).